Consider the following 1480-residue polypeptide: Cystic fibrosis transmembrane conductance regulator (1480 aa).

Over 1–77 (MQRSPLEKAS…KLINALRRCF (77 aa)) the chain is Cytoplasmic. The chain crosses the membrane as a helical span at residues 78–98 (FWRFMFYGIFLYLGEVTKAVQ). Positions 81–365 (FMFYGIFLYL…WAVQTWYDSL (285 aa)) constitute an ABC transmembrane type-1 1 domain. Topologically, residues 99–122 (PLLLGRIIASYDPDNKEERSIAIY) are extracellular. A helical transmembrane segment spans residues 123 to 146 (LGIGLCLLFIVRTLLLHPAIFGLH). The Cytoplasmic segment spans residues 147 to 195 (HIGMQMRIAMFSLIYKKTLKLSSRVLDKISIGQLVSLLSNNLNKFDEGL). A helical membrane pass occupies residues 196–216 (ALAHFVWIAPLQVALLMGLIW). Residues 217 to 222 (ELLQAS) lie on the Extracellular side of the membrane. The chain crosses the membrane as a helical span at residues 223 to 243 (AFCGLGFLIVLALFQAGLGRM). Topologically, residues 244 to 298 (MMKYRDQRAGKINERLVITSEMIENIQSVKAYCWEEAMEKMIENLRQTELKLTRK) are cytoplasmic. Residues 299-319 (AAYVRYFNSSAFFFSGFFVVF) traverse the membrane as a helical segment. Topologically, residues 320 to 339 (LSVLPYALIKGIVLRKIFTT) are extracellular. Residues 340-358 (ISFCIVLRMAVTRQFPWAV) traverse the membrane as a helical segment. Topologically, residues 359–858 (QTWYDSLGAI…YLRYITVHKS (500 aa)) are cytoplasmic. ATP-binding positions include W401, S434, 458-465 (GSTGAGKT), and Q493. The 224-residue stretch at 423 to 646 (NGDDSLFFSN…RPDFSSKLMG (224 aa)) folds into the ABC transporter 1 domain. The S-palmitoyl cysteine moiety is linked to residue C524. S549 and S660 each carry phosphoserine. Residues 654 to 831 (SAERRNSILT…EEINEEDLKE (178 aa)) form a disordered R region region. S670 carries the phosphoserine; by PKA modification. K688 is covalently cross-linked (Glycyl lysine isopeptide (Lys-Gly) (interchain with G-Cter in ubiquitin)). A phosphoserine mark is found at S700 and S712. Phosphothreonine is present on T717. A phosphoserine mark is found at S737, S753, S768, S790, S795, and S813. A helical transmembrane segment spans residues 859–879 (LIFVLIWCLVIFLAEVAASLV). An ABC transmembrane type-1 2 domain is found at 859–1155 (LIFVLIWCLV…AVNSSIDVDS (297 aa)). The Extracellular portion of the chain corresponds to 880–918 (VLWLLGNTPLQDKGNSTHSRNNSYAVIITSTSSYYVFYI). N-linked (GlcNAc...) asparagine glycosylation is found at N894 and N900. The discontinuously helical transmembrane segment at 919-939 (YVGVADTLLAMGFFRGLPLVH) threads the bilayer. At 940–990 (TLITVSKILHNKMLHSVLQAPMSTLNTLKAGGILNRFSKDIAILDDLLPLT) the chain is on the cytoplasmic side. A helical transmembrane segment spans residues 991–1011 (IFDFIQLLLIVIGAIAVVAVL). Topologically, residues 1012 to 1013 (QP) are extracellular. A helical membrane pass occupies residues 1014–1034 (YIFVATVPVIVAFIMLRAYFL). Residues 1035 to 1095 (QTSQQLKQLE…TANWFLYLST (61 aa)) are Cytoplasmic-facing. Residues 1096–1116 (LRWFQMRIEMIFVIFFIAVTF) form a helical membrane-spanning segment. Over 1117 to 1130 (ISILTTGEGEGRVG) the chain is Extracellular. A helical transmembrane segment spans residues 1131–1151 (IILTLAMNIMSTLQWAVNSSI). Residues 1152–1480 (DVDSLMRSVS…TEEEVQDTRL (329 aa)) lie on the Cytoplasmic side of the membrane. Positions 1210-1443 (MTVKDLTAKY…RSLFQQAISP (234 aa)) constitute an ABC transporter 2 domain. ATP-binding positions include Y1219 and 1244 to 1251 (GRTGSGKS). Positions 1386-1480 (RTLKQAFADC…TEEEVQDTRL (95 aa)) are interaction with GORASP2. The S-palmitoyl cysteine moiety is linked to residue C1395. Residues S1444 and S1456 each carry the phosphoserine modification. Positions 1452 to 1480 (HRNSSKCKSKPQIAALKEETEEEVQDTRL) are disordered. Residues 1470–1480 (ETEEEVQDTRL) are compositionally biased toward acidic residues. The PDZ-binding motif lies at 1478–1480 (TRL).

The protein belongs to the ABC transporter superfamily. ABCC family. CFTR transporter (TC 3.A.1.202) subfamily. In terms of assembly, monomer; does not require oligomerization for channel activity. May form oligomers in the membrane. Interacts with SLC26A3, SLC26A6 and NHERF1. Interacts with SHANK2. Interacts with MYO6. Interacts (via C-terminus) with GOPC (via PDZ domain); this promotes CFTR internalization and thereby decreases channel activity. Interacts with SLC4A7 through NHERF1. Found in a complex with MYO5B and RAB11A. Interacts with ANO1. Interacts with SLC26A8. Interacts with AHCYL1; the interaction increases CFTR activity. Interacts with CSE1L. The core-glycosylated form interacts with GORASP2 (via PDZ GRASP-type 1 domain) in respone to ER stress. Interacts with MARCHF2; the interaction leads to CFTR ubiqtuitination and degradation. Interacts with ADGRG2. Post-translationally, N-glycosylated. In terms of processing, phosphorylated; cAMP treatment promotes phosphorylation and activates the channel. Dephosphorylation decreases the ATPase activity (in vitro). Phosphorylation at PKA sites activates the channel. Phosphorylation at PKC sites enhances the response to phosphorylation by PKA. Phosphorylated by AMPK; this inhibits channel activity. Ubiquitinated, leading to its degradation in the lysosome. Deubiquitination by USP10 in early endosomes enhances its endocytic recycling to the cell membrane. Ubiquitinated by RNF185 during ER stress. Ubiquitinated by MARCHF2.

It is found in the apical cell membrane. Its subcellular location is the early endosome membrane. The protein localises to the cell membrane. The protein resides in the recycling endosome membrane. It localises to the endoplasmic reticulum membrane. It is found in the nucleus. The catalysed reaction is ATP + H2O + closed Cl(-) channel = ADP + phosphate + open Cl(-) channel.. The enzyme catalyses chloride(in) = chloride(out). It catalyses the reaction hydrogencarbonate(in) = hydrogencarbonate(out). It carries out the reaction ATP + H2O = ADP + phosphate + H(+). Its function is as follows. Epithelial ion channel that plays an important role in the regulation of epithelial ion and water transport and fluid homeostasis. Mediates the transport of chloride ions across the cell membrane. Possesses an intrinsic ATPase activity and utilizes ATP to gate its channel; the passive flow of anions through the channel is gated by cycles of ATP binding and hydrolysis by the ATP-binding domains. The ion channel is also permeable to HCO(3)(-); selectivity depends on the extracellular chloride concentration. Exerts its function also by modulating the activity of other ion channels and transporters. Contributes to the regulation of the pH and the ion content of the epithelial fluid layer. Modulates the activity of the epithelial sodium channel (ENaC) complex, in part by regulating the cell surface expression of the ENaC complex. May regulate bicarbonate secretion and salvage in epithelial cells by regulating the transporter SLC4A7. Can inhibit the chloride channel activity of ANO1. Plays a role in the chloride and bicarbonate homeostasis during sperm epididymal maturation and capacitation. In Pongo abelii (Sumatran orangutan), this protein is Cystic fibrosis transmembrane conductance regulator.